Here is a 510-residue protein sequence, read N- to C-terminus: ATP synthase subunit alpha (510 aa).

169 to 176 (GDRQTGKT) is an ATP binding site.

It belongs to the ATPase alpha/beta chains family. F-type ATPases have 2 components, CF(1) - the catalytic core - and CF(0) - the membrane proton channel. CF(1) has five subunits: alpha(3), beta(3), gamma(1), delta(1), epsilon(1). CF(0) has three main subunits: a(1), b(2) and c(9-12). The alpha and beta chains form an alternating ring which encloses part of the gamma chain. CF(1) is attached to CF(0) by a central stalk formed by the gamma and epsilon chains, while a peripheral stalk is formed by the delta and b chains.

It is found in the cell inner membrane. It carries out the reaction ATP + H2O + 4 H(+)(in) = ADP + phosphate + 5 H(+)(out). Functionally, produces ATP from ADP in the presence of a proton gradient across the membrane. The alpha chain is a regulatory subunit. This is ATP synthase subunit alpha from Rickettsia rickettsii (strain Iowa).